Consider the following 139-residue polypeptide: Transcription antitermination protein NusB (139 aa).

Belongs to the NusB family.

Functionally, involved in transcription antitermination. Required for transcription of ribosomal RNA (rRNA) genes. Binds specifically to the boxA antiterminator sequence of the ribosomal RNA (rrn) operons. The chain is Transcription antitermination protein NusB from Pectobacterium carotovorum subsp. carotovorum (strain PC1).